The sequence spans 185 residues: Ribosome-recycling factor (185 aa).

The interval 138–185 is disordered; sequence ALKKQEKDGEITEDEERRLEKEVQKVTDESTKKIDQMADNKRKEIIQG.

The protein belongs to the RRF family.

The protein localises to the cytoplasm. In terms of biological role, responsible for the release of ribosomes from messenger RNA at the termination of protein biosynthesis. May increase the efficiency of translation by recycling ribosomes from one round of translation to another. The polypeptide is Ribosome-recycling factor (Lactobacillus delbrueckii subsp. bulgaricus (strain ATCC BAA-365 / Lb-18)).